The sequence spans 506 residues: MDLLLLEKTLLALFIAATIAVTISKLRGKRFKLPPGPIPVPIFGYWLQVGDDLNHRNLTDYAKRFGEIFLLRMGQRNLVVVSSPELAKEVLHTQCVEFGSRTRNVVFDIFTGKGQDMVFTVYGEHWRKMRRIMTVPFFTNKVVQQYRYGWESEAESVVNDVKNNAEASVGGIVIRKRLQLMMYNIMYRIMFDRRFESEEDPLFVKLKALNGERSRLAQSFEYNYGDFIPILRPFLKGYLKVCKEVKDRRLQLFKDYFVDERKKLESTKSTTSNDGLKCAIDHILDAQKKGEINDDNVLYIVENINVAAIETTLWSIEWGIAELVNHQDIQNKVREEMDRVLGPGHQVTEPDLHKLPYLQAVIKETLRLRMAIPLLVPHMNLHDPKLNGFDIPAESKILVNAWWLPNNPAHWKKPEEFRPERFLEEESHVEANGNDFRYLPFGVGRRSCPGIILALPILGITIGRLVQNVELLPPPGQSKIDTSEKGGQFSLHILKHSTIVAKPRSF.

Residues 3-23 traverse the membrane as a helical segment; sequence LLLLEKTLLALFIAATIAVTI. Residues 213–218 and A307 each bind (E)-cinnamate; that span reads RSRLAQ. Heme is bound at residue C448.

The protein belongs to the cytochrome P450 family. It depends on heme as a cofactor.

Its subcellular location is the membrane. The enzyme catalyses (E)-cinnamate + reduced [NADPH--hemoprotein reductase] + O2 = (E)-4-coumarate + oxidized [NADPH--hemoprotein reductase] + H2O + H(+). It functions in the pathway phenylpropanoid metabolism; trans-4-coumarate biosynthesis; trans-4-coumarate from trans-cinnamate: step 1/1. In terms of biological role, catalyzes the first oxidative step of the phenylpropanoid pathway in higher plants by transforming trans-cinnamate into p-coumarate. The compounds formed by this pathway are essential components for lignification, pollination, and defense against ultraviolet light, predators and pathogens. The sequence is that of Trans-cinnamate 4-monooxygenase (CYP73A3) from Medicago sativa (Alfalfa).